The chain runs to 34 residues: uncharacterized protein (34 aa).

This is an uncharacterized protein from Treponema pallidum (strain Nichols).